Here is a 128-residue protein sequence, read N- to C-terminus: Disintegrin gabonin-1 (128 aa).

The first 20 residues, Met1–Ser20, serve as a signal peptide directing secretion. A propeptide spanning residues Ile21–Met47 is cleaved from the precursor. The 66-residue stretch at Met47–Glu112 folds into the Disintegrin domain. 4 cysteine pairs are disulfide-bonded: Cys53–Cys76, Cys67–Cys73, Cys72–Cys97, and Cys85–Cys104. The Cell attachment site signature appears at Arg89 to Asp91. The interval Pro108–Met128 is disordered.

The protein belongs to the disintegrin family. Dimeric disintegrin subfamily. Heterodimer with bitisgabonin (bitisgabonin-1 is the name of the heterodimer); disulfide-linked. As to expression, expressed by the venom gland.

Its subcellular location is the secreted. Its function is as follows. The heterodimer bitisgabonin-1 is a potent inhibitor of the adhesion of the RGD-dependent integrin alpha-5/beta-1 (ITGA5/ITGB1) to immobilized fibronectin. The polypeptide is Disintegrin gabonin-1 (Bitis gabonica (Gaboon adder)).